We begin with the raw amino-acid sequence, 113 residues long: MHELSLCQSAVEIIQRQAEQHDVKRVTAVWLEIGALSCVEESAVRFSFEIVCHGTVAQGCDLHIVYKPAQAWCWDCSQVVEVHQHDAQCPLCHGERLRVDTGDSLIVKSIEVE.

The Ni(2+) site is built by H2 and E3. Residues C73, C76, C89, and C92 each coordinate Zn(2+).

The protein belongs to the HypA/HybF family. HybF subfamily.

Functionally, involved in the maturation of [NiFe] hydrogenases. Required for nickel insertion into the metal center of the hydrogenase. The protein is Hydrogenase maturation factor HybF of Escherichia coli O157:H7.